The following is a 188-amino-acid chain: Probable DNA-directed RNA polymerase subunit delta (188 aa).

Residues 14-83 enclose the HTH HARE-type domain; that stretch reads LSMIEVARAI…GENKWGLRSW (70 aa). Residues 119 to 188 form a disordered region; it reads EDAIDYSADD…EDEEDEEEEE (70 aa).

This sequence belongs to the RpoE family. As to quaternary structure, RNAP is composed of a core of 2 alpha, a beta and a beta' subunits. The core is associated with a delta subunit and one of several sigma factors.

In terms of biological role, participates in both the initiation and recycling phases of transcription. In the presence of the delta subunit, RNAP displays an increased specificity of transcription, a decreased affinity for nucleic acids, and an increased efficiency of RNA synthesis because of enhanced recycling. This is Probable DNA-directed RNA polymerase subunit delta from Streptococcus equi subsp. equi (strain 4047).